A 304-amino-acid polypeptide reads, in one-letter code: Plasmodesmata-located protein 3 (304 aa).

Positions 1-26 (MGFYSLKQLLLLYIIIMALFSDLKLA) are cleaved as a signal peptide. Residues 27-272 (KSSSPEYTNL…SSSSGTTGKT (246 aa)) lie on the Extracellular side of the membrane. Gnk2-homologous domains follow at residues 34–138 (TNLI…ISGF) and 143–242 (GMEL…FYPN). Disulfide bonds link cysteine 41-cysteine 116, cysteine 92-cysteine 101, cysteine 104-cysteine 129, cysteine 151-cysteine 220, cysteine 196-cysteine 205, and cysteine 208-cysteine 233. The helical transmembrane segment at 273 to 293 (VAIIVGGTAGVGFLVICLLFV) threads the bilayer. Residues 273-293 (VAIIVGGTAGVGFLVICLLFV) form a necessary and sufficient for plasmodesmal targeting region. The Cytoplasmic portion of the chain corresponds to 294 to 304 (KNLMKKKYDDY).

Belongs to the cysteine-rich repeat secretory protein family. Plasmodesmata-located proteins (PDLD) subfamily. (Microbial infection) Interacts with Grapevine fanleaf virus (GFLV) 2B-MP. In terms of tissue distribution, highly expressed in inflorescence pedacel and shoot apex. Expressed in the outermost L1 layer of the shoot apical meristem and in the epidermis of bulging floral primordia. Within the L1, expression was restricted to the peripheral zone (at protein level).

It localises to the cell membrane. The protein resides in the cell junction. Its subcellular location is the plasmodesma. In terms of biological role, modulates cell-to-cell trafficking. The protein is Plasmodesmata-located protein 3 of Arabidopsis thaliana (Mouse-ear cress).